The chain runs to 320 residues: MDMATGAKEVVVVEAYEYEFDLENPFTSPADEPIASLLDAEGHHSPSVSAAASAARREAAGFISKVRYDGELDVHPRVAYLALNYVDRYLSKRQLACERNPWAPRLLAISCLTLAAKMQRAAAISAADIQRGEEFMFDEAKIQRMEQMVLNALEWRTRSVTPLAFLGFFLSACFPQPRHPALLDAIKARAVDLLLRVQPEVKMAEFSPSVAAAAALLAAAGEVAGAHLLGFEAGVAACPFVNSEKLRECGEVMAAACGVGPSWAAAATSAETPVTVLGHHRSASSESERTTTVGSAANSADAKRRCMGPPRQWGVGGPDE.

Residues 279–320 (HHRSASSESERTTTVGSAANSADAKRRCMGPPRQWGVGGPDE) form a disordered region.

Belongs to the cyclin family. Cyclin D subfamily.

The chain is Cyclin-D6-1 (CYCD6-1) from Oryza sativa subsp. japonica (Rice).